The primary structure comprises 128 residues: Otoraplin (128 aa).

The first 17 residues, 1-17, serve as a signal peptide directing secretion; that stretch reads MARILLLFLPGLVAVCA. Disulfide bonds link Cys-32/Cys-37 and Cys-55/Cys-127. An SH3 domain is found at 39–110; it reads YTISLASAQE…PRNLVKEQRV (72 aa).

Belongs to the MIA/OTOR family. As to expression, highly expressed in cochlea.

Its subcellular location is the secreted. The polypeptide is Otoraplin (OTOR) (Homo sapiens (Human)).